The chain runs to 388 residues: Dual-specificity RNA methyltransferase RlmN (388 aa).

Catalysis depends on Glu-109, which acts as the Proton acceptor. Positions 115 to 354 constitute a Radical SAM core domain; it reads EDDRATLCVS…TIVRKTRGDD (240 aa). Cysteines 122 and 359 form a disulfide. Residues Cys-129, Cys-133, and Cys-136 each contribute to the [4Fe-4S] cluster site. Residues 183-184, Ser-215, 237-239, and Asn-316 each bind S-adenosyl-L-methionine; these read GE and SLH. Catalysis depends on Cys-359, which acts as the S-methylcysteine intermediate.

This sequence belongs to the radical SAM superfamily. RlmN family. It depends on [4Fe-4S] cluster as a cofactor.

It localises to the cytoplasm. It catalyses the reaction adenosine(2503) in 23S rRNA + 2 reduced [2Fe-2S]-[ferredoxin] + 2 S-adenosyl-L-methionine = 2-methyladenosine(2503) in 23S rRNA + 5'-deoxyadenosine + L-methionine + 2 oxidized [2Fe-2S]-[ferredoxin] + S-adenosyl-L-homocysteine. The enzyme catalyses adenosine(37) in tRNA + 2 reduced [2Fe-2S]-[ferredoxin] + 2 S-adenosyl-L-methionine = 2-methyladenosine(37) in tRNA + 5'-deoxyadenosine + L-methionine + 2 oxidized [2Fe-2S]-[ferredoxin] + S-adenosyl-L-homocysteine. Its function is as follows. Specifically methylates position 2 of adenine 2503 in 23S rRNA and position 2 of adenine 37 in tRNAs. m2A2503 modification seems to play a crucial role in the proofreading step occurring at the peptidyl transferase center and thus would serve to optimize ribosomal fidelity. The protein is Dual-specificity RNA methyltransferase RlmN of Cronobacter sakazakii (strain ATCC BAA-894) (Enterobacter sakazakii).